A 91-amino-acid chain; its full sequence is MARVTVQDAVEKIGNRFDLVLVAARRARQIQVGGKDPLVAEENDKYTVIALREIEEGLITSQILDLRDRQEQQEQEAAEIQAVTAIAEGRR.

It belongs to the RNA polymerase subunit omega family. As to quaternary structure, the RNAP catalytic core consists of 2 alpha, 1 beta, 1 beta' and 1 omega subunit. When a sigma factor is associated with the core the holoenzyme is formed, which can initiate transcription.

The catalysed reaction is RNA(n) + a ribonucleoside 5'-triphosphate = RNA(n+1) + diphosphate. In terms of biological role, promotes RNA polymerase assembly. Latches the N- and C-terminal regions of the beta' subunit thereby facilitating its interaction with the beta and alpha subunits. This is DNA-directed RNA polymerase subunit omega from Sodalis glossinidius (strain morsitans).